The primary structure comprises 177 residues: Putative HTH-type transcriptional regulator YvaV (177 aa).

Positions 49–73 (LTELSEATGMSKTRMSQVVREMLDA) form a DNA-binding region, H-T-H motif.

Belongs to the GbsR family.

In Bacillus subtilis (strain 168), this protein is Putative HTH-type transcriptional regulator YvaV (yvaV).